A 462-amino-acid polypeptide reads, in one-letter code: Steroidogenic factor 1 (462 aa).

Residues 10–85 (DELCPVCGDK…VGMRLEAVRA (76 aa)) constitute a DNA-binding region (nuclear receptor). Residues 13–33 (CPVCGDKVSGYHYGLLTCESC) form an NR C4-type zinc finger. K34, K38, and K72 each carry N6-acetyllysine. Residues 49–73 (CTESQSCKIDKTQRKRCPFCRFQKC) form an NR C4-type zinc finger. Residues 117-149 (GFKLETGPPMGVPPPPPPPPDYMLPPSLHAPEP) are disordered. K119 participates in a covalent cross-link: Glycyl lysine isopeptide (Lys-Gly) (interchain with G-Cter in SUMO). The span at 126–139 (MGVPPPPPPPPDYM) shows a compositional bias: pro residues. A Glycyl lysine isopeptide (Lys-Gly) (interchain with G-Cter in SUMO) cross-link involves residue K194. S203 carries the post-translational modification Phosphoserine; by CDK7. Residues 223–460 (NVPELILQLL…NLLIEMLQAK (238 aa)) enclose the NR LBD domain. Positions 342, 437, and 441 each coordinate a 1,2-diacyl-sn-glycero-3-phosphocholine.

This sequence belongs to the nuclear hormone receptor family. NR5 subfamily. In terms of assembly, binds DNA as a monomer. Part of a complex consisting of SFPQ, NONO and NR5A1. Interacts with NR0B2, NCOA2 and PPARGC1A. Interacts with DGKQ and CDK7. Binds to and activated by HIPK3. Acetylation stimulates the transcriptional activity. In terms of processing, sumoylation reduces CDK7-mediated phosphorylation on Ser-203. Post-translationally, phosphorylated on Ser-203 by CDK7. This phosphorylation promotes transcriptional activity.

The protein localises to the nucleus. Transcriptional activator. Seems to be essential for sexual differentiation and formation of the primary steroidogenic tissues. Binds to the Ad4 site found in the promoter region of steroidogenic P450 genes such as CYP11A, CYP11B and CYP21B. Also regulates the AMH/Muellerian inhibiting substance gene as well as the AHCH and STAR genes. 5'-YCAAGGYC-3' and 5'-RRAGGTCA-3' are the consensus sequences for the recognition by NR5A1. The SFPQ-NONO-NR5A1 complex binds to the CYP17 promoter and regulates basal and cAMP-dependent transcriptional activity. Binds phosphatidylcholine and phospholipids with a phosphatidylinositol (PI) headgroup, in particular PI(3,4)P2 and PI(3,4,5)P3. Activated by the phosphorylation of NR5A1 by HIPK3 leading to increased steroidogenic gene expression upon cAMP signaling pathway stimulation. The polypeptide is Steroidogenic factor 1 (Nr5a1) (Rattus norvegicus (Rat)).